We begin with the raw amino-acid sequence, 329 residues long: Taste receptor type 2 member 134 (329 aa).

Residues 1 to 27 are Extracellular-facing; sequence MRCSLRGCVQGRGGKSGVSLSKFSPKK. A helical transmembrane segment spans residues 28–48; that stretch reads MSFFFIFMVIFCIQSLVALLQ. Residues 49–68 are Cytoplasmic-facing; the sequence is NGFLATVLGREWVRSQGLPA. The helical transmembrane segment at 69 to 89 threads the bilayer; it reads GDMIVACLAASRFCLHGVAIV. Residues 90–121 are Extracellular-facing; sequence NNFLTFVKLWSQKIYFSVLWDFVNTVNFWCTT. The helical transmembrane segment at 122–142 threads the bilayer; sequence WLAIFYCVKISSFSHPIFFWI. Topologically, residues 143-153 are cytoplasmic; it reads KWRISRSVPRL. The chain crosses the membrane as a helical span at residues 154–174; that stretch reads LLGSLVIGGLSAVSSATGNTI. At 175-201 the chain is on the extracellular side; it reads AFQMTACENYTLAYRTRAFYAYYFRCH. N-linked (GlcNAc...) asparagine glycosylation is present at asparagine 183. A helical transmembrane segment spans residues 202–222; that stretch reads AMLMWIIPFFLFLLSVILLMF. The Cytoplasmic portion of the chain corresponds to 223-251; the sequence is SLYRHLEHMRYRRPWSHDYSTQAHTMALK. Residues 252–272 form a helical membrane-spanning segment; sequence SLAFFLVFYTSYVLFLVISVT. Topologically, residues 273-282 are extracellular; the sequence is RVVNVHSSWH. A helical membrane pass occupies residues 283-303; sequence WAWEVITYMGILLHSTILTLS. Residues 304–329 are Cytoplasmic-facing; sequence NPKMRKALKIKFPDLCVARSQDKRRG.

It belongs to the G-protein coupled receptor T2R family. Expressed in tongue and gastrointestinal tract.

Its subcellular location is the membrane. Putative taste receptor which may play a role in the perception of bitterness. This chain is Taste receptor type 2 member 134, found in Rattus norvegicus (Rat).